The chain runs to 204 residues: MIGKLKGTIDEIGEDYVLVDVHGVCYVAHCSARTLSKLGSAGEACVLFIETYVREDQLKLFGFMTALEREWFNLLQSVQGVGAKVALAVLSTLTPSELANAIALQDRAAVSRAPGVGPKVAMRLVTELKNRAPAFAGEAINIALKQELGEGVAAAPVADAVSALTNLGYSRDQAANAVAAAMKTAGDGADSAKLIRLGLKELAR.

The tract at residues 1-64 (MIGKLKGTID…EDQLKLFGFM (64 aa)) is domain I. A domain II region spans residues 65-143 (TALEREWFNL…AFAGEAINIA (79 aa)). The interval 144 to 151 (LKQELGEG) is flexible linker. Residues 152-204 (VAAAPVADAVSALTNLGYSRDQAANAVAAAMKTAGDGADSAKLIRLGLKELAR) are domain III.

Belongs to the RuvA family. Homotetramer. Forms an RuvA(8)-RuvB(12)-Holliday junction (HJ) complex. HJ DNA is sandwiched between 2 RuvA tetramers; dsDNA enters through RuvA and exits via RuvB. An RuvB hexamer assembles on each DNA strand where it exits the tetramer. Each RuvB hexamer is contacted by two RuvA subunits (via domain III) on 2 adjacent RuvB subunits; this complex drives branch migration. In the full resolvosome a probable DNA-RuvA(4)-RuvB(12)-RuvC(2) complex forms which resolves the HJ.

It localises to the cytoplasm. The RuvA-RuvB-RuvC complex processes Holliday junction (HJ) DNA during genetic recombination and DNA repair, while the RuvA-RuvB complex plays an important role in the rescue of blocked DNA replication forks via replication fork reversal (RFR). RuvA specifically binds to HJ cruciform DNA, conferring on it an open structure. The RuvB hexamer acts as an ATP-dependent pump, pulling dsDNA into and through the RuvAB complex. HJ branch migration allows RuvC to scan DNA until it finds its consensus sequence, where it cleaves and resolves the cruciform DNA. This chain is Holliday junction branch migration complex subunit RuvA, found in Rhizobium etli (strain CIAT 652).